Here is a 493-residue protein sequence, read N- to C-terminus: Cytochrome P450 2E1 (493 aa).

298 to 303 provides a ligand contact to substrate; it reads FAGTET. Position 437 (Cys437) interacts with heme.

The protein belongs to the cytochrome P450 family. As to quaternary structure, interacts with chaperones HSP70 and HSP90; this interaction is required for initial targeting to mitochondria. It depends on heme as a cofactor.

The protein localises to the endoplasmic reticulum membrane. It localises to the microsome membrane. The protein resides in the mitochondrion inner membrane. It catalyses the reaction an organic molecule + reduced [NADPH--hemoprotein reductase] + O2 = an alcohol + oxidized [NADPH--hemoprotein reductase] + H2O + H(+). The catalysed reaction is (5Z,8Z,11Z)-eicosatrienoate + reduced [NADPH--hemoprotein reductase] + O2 = 19-hydroxy-(5Z,8Z,11Z)-eicosatrienoate + oxidized [NADPH--hemoprotein reductase] + H2O + H(+). The enzyme catalyses (5Z,8Z,11Z,14Z,17Z)-eicosapentaenoate + reduced [NADPH--hemoprotein reductase] + O2 = 19-hydroxy-(5Z,8Z,11Z,14Z,17Z)-eicosapentaenoate + oxidized [NADPH--hemoprotein reductase] + H2O + H(+). It carries out the reaction (4Z,7Z,10Z,13Z,16Z,19Z)-docosahexaenoate + reduced [NADPH--hemoprotein reductase] + O2 = 21-hydroxy-(4Z,7Z,10Z,13Z,16Z,19Z)-docosahexaenoate + oxidized [NADPH--hemoprotein reductase] + H2O + H(+). It catalyses the reaction dodecanoate + reduced [NADPH--hemoprotein reductase] + O2 = 11-hydroxydodecanoate + oxidized [NADPH--hemoprotein reductase] + H2O + H(+). The catalysed reaction is tetradecanoate + reduced [NADPH--hemoprotein reductase] + O2 = 13-hydroxytetradecanoate + oxidized [NADPH--hemoprotein reductase] + H2O + H(+). The enzyme catalyses 4-nitrophenol + NADPH + O2 + H(+) = 4-nitrocatechol + NADP(+) + H2O. The protein operates within lipid metabolism; fatty acid metabolism. With respect to regulation, the omega-1 hydroxylase activity is stimulated by cytochrome b5. Functionally, a cytochrome P450 monooxygenase involved in the metabolism of fatty acids. Mechanistically, uses molecular oxygen inserting one oxygen atom into a substrate, and reducing the second into a water molecule, with two electrons provided by NADPH via cytochrome P450 reductase (NADPH--hemoprotein reductase). Catalyzes the hydroxylation of carbon-hydrogen bonds. Hydroxylates fatty acids specifically at the omega-1 position displaying the highest catalytic activity for saturated fatty acids. May be involved in the oxidative metabolism of xenobiotics. The chain is Cytochrome P450 2E1 from Rattus norvegicus (Rat).